Here is a 161-residue protein sequence, read N- to C-terminus: MVVAVYPGTFDPMTRGHEDLVRRASNIFDELVVGVAHSPNKRPFFSLEERIGIAREVLGHYPNVRVEGFSGLLKDFVRKNNARVIVRGLRAVSDFEYEFQMAGMNRYLLPDVETMFLTPSDQYQFISGTFVREIAVLGGDVSKFVFPSVERWLQEKIGKAE.

Thr9 provides a ligand contact to substrate. ATP is bound by residues 9-10 (TF) and His17. Substrate is bound by residues Lys41, Leu73, and Arg87. ATP contacts are provided by residues 88–90 (GLR), Glu98, and 123–129 (YQFISGT).

The protein belongs to the bacterial CoaD family. Homohexamer. It depends on Mg(2+) as a cofactor.

The protein localises to the cytoplasm. It carries out the reaction (R)-4'-phosphopantetheine + ATP + H(+) = 3'-dephospho-CoA + diphosphate. It functions in the pathway cofactor biosynthesis; coenzyme A biosynthesis; CoA from (R)-pantothenate: step 4/5. Functionally, reversibly transfers an adenylyl group from ATP to 4'-phosphopantetheine, yielding dephospho-CoA (dPCoA) and pyrophosphate. This Cupriavidus metallidurans (strain ATCC 43123 / DSM 2839 / NBRC 102507 / CH34) (Ralstonia metallidurans) protein is Phosphopantetheine adenylyltransferase.